A 389-amino-acid polypeptide reads, in one-letter code: Tryptophan 2,3-dioxygenase (389 aa).

Residues 60-64 and Arg131 contribute to the substrate site; that span reads FIITH. A heme-binding site is contributed by His316. A substrate-binding site is contributed by Thr331.

Belongs to the tryptophan 2,3-dioxygenase family. In terms of assembly, homotetramer. Dimer of dimers. The cofactor is heme.

The catalysed reaction is L-tryptophan + O2 = N-formyl-L-kynurenine. It functions in the pathway amino-acid degradation; L-tryptophan degradation via kynurenine pathway; L-kynurenine from L-tryptophan: step 1/2. Its pathway is pigment biosynthesis; ommochrome biosynthesis. Heme-dependent dioxygenase that catalyzes the oxidative cleavage of the L-tryptophan (L-Trp) pyrrole ring and converts L-tryptophan to N-formyl-L-kynurenine. Catalyzes the oxidative cleavage of the indole moiety. This chain is Tryptophan 2,3-dioxygenase, found in Mayetiola destructor (Hessian fly).